A 969-amino-acid polypeptide reads, in one-letter code: Rab3 GTPase-activating protein catalytic subunit (969 aa).

Residues 532-549 (DDGKKSSSSDGARDRSRG) are compositionally biased toward basic and acidic residues. The tract at residues 532–613 (DDGKKSSSSD…PEGRLQPHGT (82 aa)) is disordered. The span at 550-572 (APEGAGPEGAGPAEAAGKSWDSW) shows a compositional bias: low complexity. Acidic residues predominate over residues 573-589 (SDSEDEFFECVSDTEEM). Residues 590–608 (KEDKEEAENRSRSKPEGRL) are compositionally biased toward basic and acidic residues.

The protein belongs to the Rab3-GAP catalytic subunit family. The Rab3 GTPase-activating complex is a heterodimer composed of rab3gap1 and rab3gap2. The Rab3 GTPase-activating complex interacts with DMXL2. Interacts with LMAN1.

It is found in the cytoplasm. The protein resides in the endoplasmic reticulum. The protein localises to the golgi apparatus. It localises to the cis-Golgi network. Its function is as follows. Catalytic subunit of the Rab3 GTPase-activating (Rab3GAP) complex composed of rab3gap1 and rab3gap2, which has GTPase-activating protein (GAP) activity towards various Rab3 subfamily members (RAB3A, RAB3B, RAB3C and RAB3D), RAB5A and RAB43, and guanine nucleotide exchange factor (GEF) activity towards RAB18. As part of the Rab3GAP complex, acts as a GAP for Rab3 proteins by converting active RAB3-GTP to the inactive form RAB3-GDP. Rab3 proteins are involved in regulated exocytosis of neurotransmitters and hormones. The Rab3GAP complex, acts as a GEF for RAB18 by promoting the conversion of inactive RAB18-GDP to the active form RAB18-GTP. Recruits and stabilizes RAB18 at the cis-Golgi membrane where RAB18 is most likely activated. Also involved in RAB18 recruitment at the endoplasmic reticulum (ER) membrane where it maintains proper ER structure. Required for normal eye and brain development. May participate in neurodevelopmental processes such as proliferation, migration and differentiation before synapse formation, and non-synaptic vesicular release of neurotransmitters. This chain is Rab3 GTPase-activating protein catalytic subunit (rab3gap1), found in Danio rerio (Zebrafish).